An 892-amino-acid polypeptide reads, in one-letter code: Transposase for transposon Tn4556 (892 aa).

Residues Met1–Gly12 show a composition bias toward basic and acidic residues. The interval Met1 to Arg63 is disordered. Positions Val23 to Gly34 are enriched in low complexity.

The protein belongs to the transposase 7 family.

In terms of biological role, required for transposition of transposon Tn4556. The polypeptide is Transposase for transposon Tn4556 (tnpA) (Streptomyces fradiae (Streptomyces roseoflavus)).